The following is a 120-amino-acid chain: FK506-binding protein 1B (120 aa).

The segment at 1–24 (MNPPQGVTKTILRPGNGRDSPHTG) is disordered. The region spanning 24–120 (GDTVIIDYTG…LVLYVCSPAG (97 aa)) is the PPIase FKBP-type domain.

Belongs to the FKBP-type PPIase family. FKBP1 subfamily.

The enzyme catalyses [protein]-peptidylproline (omega=180) = [protein]-peptidylproline (omega=0). Its function is as follows. PPIases accelerate the folding of proteins. It catalyzes the cis-trans isomerization of proline imidic peptide bonds in oligopeptides. This chain is FK506-binding protein 1B (FKBP3), found in Emericella nidulans (strain FGSC A4 / ATCC 38163 / CBS 112.46 / NRRL 194 / M139) (Aspergillus nidulans).